A 192-amino-acid polypeptide reads, in one-letter code: MFYNKMFIHSISGGSSLLSASEVFASAFFSKASSLSSLNLCSRSSDNSFSYFLCVLVSTFLNSLVIIESERDPEPLVGLPTEEGELGSQVTGELAGDDMPKLCLLEFSLLLAFSSSLFSCSNSCNFFSVLLKFEWLFNNLSCNSLLVRVSFSISCTYSARSFSNCLVKKLCASCKSLNAVSSSSNFLEESSS.

The helical; Signal-anchor transmembrane segment at Phe7–Phe29 threads the bilayer. The helical transmembrane segment at Tyr51–Ile67 threads the bilayer.

The protein localises to the membrane. This is an uncharacterized protein from Saccharomyces cerevisiae (strain ATCC 204508 / S288c) (Baker's yeast).